The sequence spans 192 residues: MVVGLFGGSFNPPHQGHALVAEIAIKRLGLDQLWWMVTPGNPLKSRNQLAPLAERIAESERVAADPRVKVTAFEQSLGVSYTANTLAWVKARNPHVHFIWIMGADGLQTFHKWQKWQEIVRTFPIAVIDRPGATLSYLSSKMTRTFDFARVDEDDARILWKKPAPAWTFIHGPRSGLSSTAIRNGSVPDDSE.

This sequence belongs to the NadD family.

The catalysed reaction is nicotinate beta-D-ribonucleotide + ATP + H(+) = deamido-NAD(+) + diphosphate. It participates in cofactor biosynthesis; NAD(+) biosynthesis; deamido-NAD(+) from nicotinate D-ribonucleotide: step 1/1. Its function is as follows. Catalyzes the reversible adenylation of nicotinate mononucleotide (NaMN) to nicotinic acid adenine dinucleotide (NaAD). The sequence is that of Probable nicotinate-nucleotide adenylyltransferase from Rhizobium leguminosarum bv. trifolii (strain WSM2304).